Consider the following 338-residue polypeptide: Acyl-CoA-binding domain-containing protein 1 (338 aa).

The helical; Signal-anchor transmembrane segment at 11-31 (IIFGLIFAYLLAKLISILLAF) threads the bilayer. N-linked (GlcNAc...) asparagine glycosylation is found at N35 and N41. A disordered region spans residues 69-89 (AEQGSLRGDEDESDDDDWEGV). Positions 77–89 (DEDESDDDDWEGV) are enriched in acidic residues. Residues 94-184 (LDEAFSAATA…VTQLYPAWVE (91 aa)) form the ACB domain. An acyl-CoA contacts are provided by residues 126-130 (YGLYK), K152, and Y171. N-linked (GlcNAc...) asparagine glycosylation occurs at N191. ANK repeat units follow at residues 217–246 (LKID…PVNA), 250–279 (EGRT…DVNA), 283–312 (EGQT…DTTI), and 316–338 (DGNS…KDSN).

It belongs to the ACBP family. In terms of assembly, interacts with RAP2-12. Binds to SMO1-1 and SMO1-2. Glycosylated. In seeds, localized in the outer integument. As to expression, expressed at low levels in roots, stems, leaves, flowers, and siliques, especially within seeds.

Its subcellular location is the cell membrane. The protein localises to the secreted. It localises to the cell wall. The protein resides in the endoplasmic reticulum membrane. Functionally, binds medium- and long-chain acyl-CoA esters with very high affinity. Can interact in vitro with arachidonyl-CoA, barely with oleoyl-CoA, but not with palmitoyl-CoA. Confers tolerance and binds to lead ions Pb(2+), probably by promoting lead translocation from roots to shoots. May function as an intracellular carrier of acyl-CoA esters. Modulates negatively sterol synthesis during embryogenesis and gametophytes development via interactions with SMO1-1 and SMO1-2; sterols serve as lipid modulators for gene expression of homeodomain-leucine zipper IV transcription factors. The chain is Acyl-CoA-binding domain-containing protein 1 from Arabidopsis thaliana (Mouse-ear cress).